A 189-amino-acid chain; its full sequence is Endoribonuclease YbeY (189 aa).

Zn(2+) is bound by residues His146, His150, and His156.

Belongs to the endoribonuclease YbeY family. Requires Zn(2+) as cofactor.

It localises to the cytoplasm. In terms of biological role, single strand-specific metallo-endoribonuclease involved in late-stage 70S ribosome quality control and in maturation of the 3' terminus of the 16S rRNA. The protein is Endoribonuclease YbeY of Prochlorococcus marinus (strain MIT 9211).